A 475-amino-acid chain; its full sequence is ATP synthase subunit beta, chloroplastic (475 aa).

Residue 155–162 (GGAGVGKT) coordinates ATP.

The protein belongs to the ATPase alpha/beta chains family. In terms of assembly, F-type ATPases have 2 components, CF(1) - the catalytic core - and CF(0) - the membrane proton channel. CF(1) has five subunits: alpha(3), beta(3), gamma(1), delta(1), epsilon(1). CF(0) has four main subunits: a(1), b(1), b'(1) and c(9-12).

Its subcellular location is the plastid. It is found in the chloroplast thylakoid membrane. The enzyme catalyses ATP + H2O + 4 H(+)(in) = ADP + phosphate + 5 H(+)(out). Functionally, produces ATP from ADP in the presence of a proton gradient across the membrane. The catalytic sites are hosted primarily by the beta subunits. The polypeptide is ATP synthase subunit beta, chloroplastic (Porphyra purpurea (Red seaweed)).